Consider the following 1375-residue polypeptide: Capping protein, Arp2/3 and myosin-I linker protein 3 (1375 aa).

Positions 124–151 (IRRGNADTPEGPRDTSPNSETSTSTTHS) are disordered. The segment covering 138-151 (TSPNSETSTSTTHS) has biased composition (low complexity). LRR repeat units follow at residues 244–264 (SLEE…QKLA), 274–295 (VLHA…SLSQ), 303–323 (GLTK…QALG), 335–357 (SLRY…NALY), 365–386 (ALVH…GALL), 392–413 (HLTY…EAPP), 424–444 (TLSH…RALL), 455–475 (DLHL…ALQE), 482–501 (CIGS…LTLV), and 509–530 (SLKH…EEIL). 2 disordered regions span residues 864–901 (RTLS…GTNI) and 969–1375 (KLRH…PGTD). Over residues 981–997 (PRTTPPGPGRPSVPVPG) the composition is skewed to pro residues. The segment covering 1007–1022 (RLDEGLEDFFSRRVMD) has biased composition (basic and acidic residues). Basic residues predominate over residues 1047 to 1062 (QKKRRRGLFHFRRPRS). The span at 1078–1097 (LPPPPPPPPTQESPPSPDPP) shows a compositional bias: pro residues. The segment covering 1098 to 1108 (SLGNNSSPCWS) has biased composition (low complexity). Over residues 1219 to 1229 (RRAEATWHIAE) the composition is skewed to basic and acidic residues. Positions 1233–1244 (ANHSCQSPSPAS) are enriched in polar residues. Residues 1272 to 1281 (PIGPRPPKPV) show a composition bias toward pro residues. A compositionally biased stretch (basic and acidic residues) spans 1348 to 1360 (QSCDKLEPDRRQP).

The protein belongs to the CARMIL family.

The protein resides in the cytoplasm. It localises to the cell membrane. The protein is Capping protein, Arp2/3 and myosin-I linker protein 3 (Carmil3) of Mus musculus (Mouse).